Consider the following 508-residue polypeptide: Matrix metalloproteinase-19 (508 aa).

A signal peptide spans 1-18 (MNCQQLWLGFLLPMTVSG). Positions 19-97 (RVLGLAEVAP…EDPFNQKTLK (79 aa)) are excised as a propeptide. Residues 83 to 90 (PRCGLEDP) carry the Cysteine switch motif. Residues Cys85 and His212 each coordinate Zn(2+). Glu213 is a catalytic residue. Residues His216 and His222 each coordinate Zn(2+). Residues 262 to 288 (IRDEEEEETELPTVPPVPTEPSPMPDP) are disordered. Over residues 274 to 287 (TVPPVPTEPSPMPD) the composition is skewed to pro residues. Hemopexin repeat units lie at residues 286 to 333 (PDPC…WEGL), 334 to 380 (PGNL…EPNL), 381 to 425 (DAAL…FTGV), and 426 to 472 (PNQP…WMHC). The cysteines at positions 289 and 472 are disulfide-linked. N-linked (GlcNAc...) asparagine glycosylation occurs at Asn464.

This sequence belongs to the peptidase M10A family. Requires Zn(2+) as cofactor. The cofactor is Ca(2+). Post-translationally, activated by autolytic cleavage after Lys-97. Tyrosine phosphorylated by PKDCC/VLK. As to expression, expressed in mammary gland, placenta, lung, pancreas, ovary, small intestine, spleen, thymus, prostate, testis colon, heart and blood vessel walls. Not detected in brain and peripheral blood leukocytes. Also expressed in the synovial fluid of normal and rheumatoid patients.

The protein localises to the secreted. It is found in the extracellular space. It localises to the extracellular matrix. Its activity is regulated as follows. Strongly inhibited by TIMP-2, TIMP-3 and TIMP-4, while TIMP-1 is less efficient. Endopeptidase that degrades various components of the extracellular matrix, such as aggrecan and cartilage oligomeric matrix protein (comp), during development, haemostasis and pathological conditions (arthritic disease). May also play a role in neovascularization or angiogenesis. Hydrolyzes collagen type IV, laminin, nidogen, nascin-C isoform, fibronectin, and type I gelatin. The chain is Matrix metalloproteinase-19 (MMP19) from Homo sapiens (Human).